Reading from the N-terminus, the 457-residue chain is tRNA modification GTPase MnmE (457 aa).

(6S)-5-formyl-5,6,7,8-tetrahydrofolate contacts are provided by R23, E86, and R125. The 157-residue stretch at 221-377 folds into the TrmE-type G domain; sequence GVSVLIAGKP…LREAVFETFI (157 aa). N231 contributes to the K(+) binding site. GTP is bound by residues 231 to 236, 250 to 256, and 275 to 278; these read NVGKSS, TSVPGTT, and DTAG. S235 contacts Mg(2+). 3 residues coordinate K(+): T250, V252, and T255. A Mg(2+)-binding site is contributed by T256. (6S)-5-formyl-5,6,7,8-tetrahydrofolate is bound at residue K457.

It belongs to the TRAFAC class TrmE-Era-EngA-EngB-Septin-like GTPase superfamily. TrmE GTPase family. Homodimer. Heterotetramer of two MnmE and two MnmG subunits. K(+) is required as a cofactor.

Its subcellular location is the cytoplasm. Exhibits a very high intrinsic GTPase hydrolysis rate. Involved in the addition of a carboxymethylaminomethyl (cmnm) group at the wobble position (U34) of certain tRNAs, forming tRNA-cmnm(5)s(2)U34. This is tRNA modification GTPase MnmE from Geobacter metallireducens (strain ATCC 53774 / DSM 7210 / GS-15).